The primary structure comprises 84 residues: Large ribosomal subunit protein bL27 (84 aa).

The disordered stretch occupies residues 1–21 (MAHKKGGGSTKNGRDSNPKYL).

This sequence belongs to the bacterial ribosomal protein bL27 family.

In Chlorobium limicola (strain DSM 245 / NBRC 103803 / 6330), this protein is Large ribosomal subunit protein bL27.